Here is a 460-residue protein sequence, read N- to C-terminus: Monocarboxylate transporter 12 (460 aa).

The Cytoplasmic portion of the chain corresponds to 1–10 (MTQEKRSLHK). 12 helical membrane passes run 11–31 (TPPD…VTVC), 58–78 (AWIH…GSYV), 86–106 (VGII…SFAT), 115–135 (LGVL…AMVG), 148–168 (IAMS…QLLI), 177–197 (LLIL…MRPI), 246–266 (FIIL…PFVY), 282–302 (AFLM…FGWV), 329–349 (FLPI…FGYF), 354–374 (VALI…SSAL), 376–396 (VVFF…GWLV), and 406–426 (FLLS…AKII). Residues 427–460 (NRIKKNPQATVVRSSDIKQEVWTNGDVSCLNAIS) are Cytoplasmic-facing.

The protein belongs to the major facilitator superfamily. Monocarboxylate porter (TC 2.A.1.13) family.

The protein resides in the cell membrane. It is found in the basolateral cell membrane. The catalysed reaction is creatine(in) = creatine(out). The enzyme catalyses guanidinoacetate(in) = guanidinoacetate(out). Its function is as follows. Functions as a transporter for creatine and as well for its precursor guanidinoacetate. Transport of creatine and GAA is independent of resting membrane potential and extracellular Na(+), Cl(-), or pH. Contributes to the process of creatine biosynthesis and distribution. This is Monocarboxylate transporter 12 (slc16a12) from Xenopus laevis (African clawed frog).